A 127-amino-acid chain; its full sequence is Glycine cleavage system H protein (127 aa).

The region spanning 24-105 (AALVGITDFA…YGEGWLVKIR (82 aa)) is the Lipoyl-binding domain. N6-lipoyllysine is present on lysine 65.

The protein belongs to the GcvH family. In terms of assembly, the glycine cleavage system is composed of four proteins: P, T, L and H. It depends on (R)-lipoate as a cofactor.

In terms of biological role, the glycine cleavage system catalyzes the degradation of glycine. The H protein shuttles the methylamine group of glycine from the P protein to the T protein. In Chlorobium limicola (strain DSM 245 / NBRC 103803 / 6330), this protein is Glycine cleavage system H protein.